A 188-amino-acid polypeptide reads, in one-letter code: Ribosome-recycling factor (188 aa).

Belongs to the RRF family.

The protein resides in the cytoplasm. Responsible for the release of ribosomes from messenger RNA at the termination of protein biosynthesis. May increase the efficiency of translation by recycling ribosomes from one round of translation to another. The protein is Ribosome-recycling factor of Gluconobacter oxydans (strain 621H) (Gluconobacter suboxydans).